Reading from the N-terminus, the 363-residue chain is Elongation factor Tu, chloroplastic (363 aa).

Residues 1–189 (TLTAAITMAL…NVDEYIPTPE (189 aa)) enclose the tr-type G domain. GTP contacts are provided by residues 55 to 59 (DCPGH) and 110 to 113 (NKED).

This sequence belongs to the TRAFAC class translation factor GTPase superfamily. Classic translation factor GTPase family. EF-Tu/EF-1A subfamily.

It localises to the plastid. The protein resides in the chloroplast. The catalysed reaction is GTP + H2O = GDP + phosphate + H(+). GTP hydrolase that promotes the GTP-dependent binding of aminoacyl-tRNA to the A-site of ribosomes during protein biosynthesis. In Gymnochlora stellata, this protein is Elongation factor Tu, chloroplastic (tufA).